Consider the following 743-residue polypeptide: MLSRLGALLQEAVGAREPSIDLLQAFVEHWKGITHYYIESTDESTPAKKTDIPWRLKQMLDILVYEEQQQAAAGEAGPCLEYLLQHKILETLCTLGKAEYPPGMRQQVFQFFSKVLAQVQHPLLHYLSVHRPVQKLLRLGGTASGSVTEKEEVQFTTVLCSKIQQDPELLAYILEGKKIVGRKKACGEPTALPKDTTSHGDKDCSHDGAPARPQLDGESCGAQALNSHMPAETEELDGGTTESNLITSLLGLCQSKKSRVALKAQENLLLLVSMASPAAATYLVQSSACCPAIVRHLCQLYRSMPVFLDPADIATLEGISWRLPSAPSDEASFPGKEALAAFLGWFDYCDHLITEAHTVVADALAKAVAENFFVETLQPQLLHVSEQSILTSTALLTAMLRQLRSPALLREAVAFLLGTDRQPEAPGDNPHTLYAHLIGHCDHLSDEISITTLRLFEELLQKPHEGIIHSLVLRNLEGRPYVAWGSPEPESYEDTLDLEEDPYFTDSFLDSGFQTPAKPRLAPATSYDGKTAVTEIVNSFLCLVPEEAKTSAFLEETGYDTYVHDAYGLFQECSSRVASWGWPLTPTPLDPHEPERPFFEGHFLRVLFDRMSRILDQPYSLNLQVTSVLSRLALFPHPHIHEYLLDPYISLAPGCRSLFSVLVRVIGDLMQRIQRVPQFPGKLLLVRKQLTGQAPGEQLDHQTLLQGVVVLEEFCKELAAIAFVKFPPHDPRQNVSPAPEGQV.

The interval 186–219 (CGEPTALPKDTTSHGDKDCSHDGAPARPQLDGES) is disordered. Positions 196 to 206 (TTSHGDKDCSH) are enriched in basic and acidic residues.

It belongs to the FHIP family. Expressed in liver.

Its function is as follows. Able to activate MAPK/ERK and TGFB signaling pathways. May regulate the activity of genes involved in intestinal barrier function and immunoprotective inflammation. May play a role in cell proliferation. This Homo sapiens (Human) protein is FHF complex subunit HOOK-interacting protein 2B.